The primary structure comprises 188 residues: NADH-quinone oxidoreductase subunit I 2 (188 aa).

4Fe-4S ferredoxin-type domains lie at 56–88 (HFLK…VVPY) and 98–127 (AKFE…LGQQ). Residues C68, C71, C74, C78, C107, C110, C113, and C117 each contribute to the [4Fe-4S] cluster site.

It belongs to the complex I 23 kDa subunit family. In terms of assembly, NDH-1 is composed of 14 different subunits. Subunits NuoA, H, J, K, L, M, N constitute the membrane sector of the complex. [4Fe-4S] cluster serves as cofactor.

It is found in the cell inner membrane. The enzyme catalyses a quinone + NADH + 5 H(+)(in) = a quinol + NAD(+) + 4 H(+)(out). Its function is as follows. NDH-1 shuttles electrons from NADH, via FMN and iron-sulfur (Fe-S) centers, to quinones in the respiratory chain. The immediate electron acceptor for the enzyme in this species is believed to be ubiquinone. Couples the redox reaction to proton translocation (for every two electrons transferred, four hydrogen ions are translocated across the cytoplasmic membrane), and thus conserves the redox energy in a proton gradient. In Rhizobium meliloti (strain 1021) (Ensifer meliloti), this protein is NADH-quinone oxidoreductase subunit I 2.